Consider the following 207-residue polypeptide: MSNKDYKKLYLVTDYRIPFNELLEKTKEALIGGVSIVQYRAKNKKTKEMCKEAKELKKLCDEFGALFLVNDRIDVALAVKANGVHIGQDDMEVSIAREIMPKDAVIGVTVHNKEEALKAIKEGADNLGVGALFSTNSKDDATLMTLETLREIKSVSNIPLYGIGGITPYNLNKDILENLDGVAVISALLNSDNIREKSKEFLNILSK.

Residues Q38–K42 and N70 each bind 4-amino-2-methyl-5-(diphosphooxymethyl)pyrimidine. D71 and D90 together coordinate Mg(2+). T109 is a 4-amino-2-methyl-5-(diphosphooxymethyl)pyrimidine binding site. T135 to S137 contributes to the 2-[(2R,5Z)-2-carboxy-4-methylthiazol-5(2H)-ylidene]ethyl phosphate binding site. Residue K138 coordinates 4-amino-2-methyl-5-(diphosphooxymethyl)pyrimidine. Residues G165 and I185 to S186 each bind 2-[(2R,5Z)-2-carboxy-4-methylthiazol-5(2H)-ylidene]ethyl phosphate.

It belongs to the thiamine-phosphate synthase family. The cofactor is Mg(2+).

It carries out the reaction 2-[(2R,5Z)-2-carboxy-4-methylthiazol-5(2H)-ylidene]ethyl phosphate + 4-amino-2-methyl-5-(diphosphooxymethyl)pyrimidine + 2 H(+) = thiamine phosphate + CO2 + diphosphate. It catalyses the reaction 2-(2-carboxy-4-methylthiazol-5-yl)ethyl phosphate + 4-amino-2-methyl-5-(diphosphooxymethyl)pyrimidine + 2 H(+) = thiamine phosphate + CO2 + diphosphate. The catalysed reaction is 4-methyl-5-(2-phosphooxyethyl)-thiazole + 4-amino-2-methyl-5-(diphosphooxymethyl)pyrimidine + H(+) = thiamine phosphate + diphosphate. It participates in cofactor biosynthesis; thiamine diphosphate biosynthesis; thiamine phosphate from 4-amino-2-methyl-5-diphosphomethylpyrimidine and 4-methyl-5-(2-phosphoethyl)-thiazole: step 1/1. Its function is as follows. Condenses 4-methyl-5-(beta-hydroxyethyl)thiazole monophosphate (THZ-P) and 2-methyl-4-amino-5-hydroxymethyl pyrimidine pyrophosphate (HMP-PP) to form thiamine monophosphate (TMP). In Clostridium perfringens (strain 13 / Type A), this protein is Thiamine-phosphate synthase.